Here is a 54-residue protein sequence, read N- to C-terminus: uncharacterized protein (54 aa).

This is an uncharacterized protein from Saccharolobus solfataricus (Sulfolobus solfataricus).